A 119-amino-acid chain; its full sequence is Holo-[acyl-carrier-protein] synthase (119 aa).

Residues aspartate 8 and glutamate 50 each coordinate Mg(2+).

The protein belongs to the P-Pant transferase superfamily. AcpS family. Mg(2+) is required as a cofactor.

The protein resides in the cytoplasm. The enzyme catalyses apo-[ACP] + CoA = holo-[ACP] + adenosine 3',5'-bisphosphate + H(+). In terms of biological role, transfers the 4'-phosphopantetheine moiety from coenzyme A to a Ser of acyl-carrier-protein. The protein is Holo-[acyl-carrier-protein] synthase of Clavibacter sepedonicus (Clavibacter michiganensis subsp. sepedonicus).